The chain runs to 336 residues: GTPase Obg (336 aa).

Residues 1 to 159 (MKFVDSATVF…LELAMELKLM (159 aa)) enclose the Obg domain. The disordered stretch occupies residues 120–143 (GGHGGRGNQHFATSTNQAPRRSEP). The segment covering 129–138 (HFATSTNQAP) has biased composition (polar residues). The OBG-type G domain occupies 160 to 323 (ADVGLVGFPN…LKDELWRQVS (164 aa)). GTP is bound by residues 166–173 (GFPNAGKS), 191–195 (FTTLV), 213–216 (DIPG), 280–283 (TKMD), and 304–306 (SSV). The Mg(2+) site is built by S173 and T193.

This sequence belongs to the TRAFAC class OBG-HflX-like GTPase superfamily. OBG GTPase family. In terms of assembly, monomer. Mg(2+) is required as a cofactor.

Its subcellular location is the cytoplasm. Its function is as follows. An essential GTPase which binds GTP, GDP and possibly (p)ppGpp with moderate affinity, with high nucleotide exchange rates and a fairly low GTP hydrolysis rate. Plays a role in control of the cell cycle, stress response, ribosome biogenesis and in those bacteria that undergo differentiation, in morphogenesis control. The chain is GTPase Obg from Chlorobium phaeovibrioides (strain DSM 265 / 1930) (Prosthecochloris vibrioformis (strain DSM 265)).